We begin with the raw amino-acid sequence, 132 residues long: NLP effector protein 15 (132 aa).

The short motif at 1 to 9 is the Conserved undecapeptide motif I element; sequence MYSWYFPKD. Positions 16–22 match the Hepta-peptide GHRHDWE motif II motif; it reads GHRHDWE.

This sequence belongs to the Necrosis inducing protein (NPP1) family.

It is found in the secreted. Its function is as follows. Secreted effector that contributes moderately to virulence during infection by P.capsici. Causes only small yellow areas at 3 days after inoculation of host C.annuum leaves; these areas expand somewhat and became necrotic at 7 days after inoculation. Leads only to chlorotic areas, without necrosis at 7 days after non-host N.benthamiana leaves infection. The chain is NLP effector protein 15 from Phytophthora capsici.